The sequence spans 336 residues: Ketoreductase adrE (336 aa).

Y171 provides a ligand contact to NADP(+).

The protein belongs to the NAD(P)-dependent epimerase/dehydratase family. Dihydroflavonol-4-reductase subfamily.

Its pathway is secondary metabolite biosynthesis; terpenoid biosynthesis. Ketoreductase; part of the gene cluster that mediates the biosynthesis of andrastins, meroterpenoid compounds that exhibit inhibitory activity against ras farnesyltransferase, suggesting that they could be promising leads for antitumor agents. The first step of the pathway is the synthesis of 3,5-dimethylorsellinic acid (DMOA) by the polyketide synthase adrD via condensation of one acetyl-CoA starter unit with 3 malonyl-CoA units and 2 methylations. DMAO is then converted to farnesyl-DMAO by the prenyltransferase adrG. The methyltransferase adrK catalyzes the methylation of the carboxyl group of farnesyl-DMAO to farnesyl-DMAO methyl ester which is further converted to epoxyfarnesyl-DMAO methyl ester by the FAD-dependent monooxygenase adrH. The terpene cyclase adrI then catalyzes the carbon skeletal rearrangement to generate the andrastin E, the first compound in the pathway having the andrastin scaffold, with the tetracyclic ring system. The post-cyclization tailoring enzymes adrF, adrE, adrJ, and adrA, are involved in the conversion of andrastin E into andrastin A. The short chain dehydrogenase adrF is responsible for the oxidation of the C-3 a hydroxyl group of andrastin E to yield the corresponding ketone, andrastin D. The ketoreductase adrE stereoselectively reduces the carbonyl moiety to reverse the stereochemistry of the C-3 position to yield andrastin F. The acetyltransferase adrJ is the acetyltransferase that attaches the acetyl group to the C-3 hydroxyl group of andrastin F to yield andrastin C. Finally, the cytochrome P450 monooxygenase adrA catalyzes two sequential oxidation reactions of the C-23 methyl group, to generate the corresponding alcohol andrastin B, and aldehyde andrastin A. The chain is Ketoreductase adrE from Penicillium rubens (strain ATCC 28089 / DSM 1075 / NRRL 1951 / Wisconsin 54-1255) (Penicillium chrysogenum).